Reading from the N-terminus, the 383-residue chain is Beta-1,3-galactosyltransferase 4 (383 aa).

The Cytoplasmic portion of the chain corresponds to 1–8 (MPLSLFRR). A helical transmembrane segment spans residues 9–29 (LLLAALLLVIIWTLFGPSGIG). Topologically, residues 30-383 (EELLSLSLAS…RCRVIAWLHS (354 aa)) are lumenal. An N-linked (GlcNAc...) asparagine glycan is attached at asparagine 149.

Belongs to the glycosyltransferase 31 family.

The protein localises to the golgi apparatus membrane. It catalyses the reaction a ganglioside GM2 (d18:1(4E)) + UDP-alpha-D-galactose = a ganglioside GM1 (d18:1(4E)) + UDP + H(+). It carries out the reaction a ganglioside GM2 + UDP-alpha-D-galactose = a ganglioside GM1 + UDP + H(+). The enzyme catalyses a ganglioside GD2 (d18:1(4E)) + UDP-alpha-D-galactose = a ganglioside GD1b (d18:1(4E)) + UDP + H(+). The catalysed reaction is a ganglioside GA2 (d18:1(4E)) + UDP-alpha-D-galactose = a ganglioside GA1 (d18:1(4E)) + UDP + H(+). The protein operates within protein modification; protein glycosylation. Its function is as follows. Involved in GM1/GD1B/GA1 ganglioside biosynthesis. In Canis lupus familiaris (Dog), this protein is Beta-1,3-galactosyltransferase 4 (B3GALT4).